We begin with the raw amino-acid sequence, 339 residues long: MQALVNKIWYQGHPLRWLLLPLSWLFAVITYVRRALFRLGIKSQTVMPVPVIVVGNITVGGSGKTPTVIYLIELLRQHGFTPGVVSRGYGVDIQGVKTVNLGASAAEVGDEPAMIVARTQVPMVVGAKRVDAANALIAEFGVDVIICDDGLQHYALGRDIELVVIDGQRGLGNGLLLPAGPLREGAWRLDAVDFIVNNGGPAAKGQFEMQLAPTEVKPVKCDLTSGEYSFDKSQPLVAMAGIGNPARFFESLRAQGYQLALCQGFDDHQPYDKTQLRDLAQDLPLLMTEKDAVKCRDFAQENWWYLAVNAKLSPQFDEQLLARLREVAAAKQGNFHGIR.

Threonine 58–threonine 65 provides a ligand contact to ATP.

Belongs to the LpxK family.

The enzyme catalyses a lipid A disaccharide + ATP = a lipid IVA + ADP + H(+). Its pathway is glycolipid biosynthesis; lipid IV(A) biosynthesis; lipid IV(A) from (3R)-3-hydroxytetradecanoyl-[acyl-carrier-protein] and UDP-N-acetyl-alpha-D-glucosamine: step 6/6. Functionally, transfers the gamma-phosphate of ATP to the 4'-position of a tetraacyldisaccharide 1-phosphate intermediate (termed DS-1-P) to form tetraacyldisaccharide 1,4'-bis-phosphate (lipid IVA). In Shewanella baltica (strain OS185), this protein is Tetraacyldisaccharide 4'-kinase.